A 1755-amino-acid polypeptide reads, in one-letter code: Transposon Ty1-JR2 Gag-Pol polyprotein (1755 aa).

The segment covering 1–16 (MESQQLSQHSHISHGS) has biased composition (low complexity). 3 disordered regions span residues 1 to 93 (MESQ…MMTQ), 126 to 173 (PQSQ…RPPP), and 352 to 421 (GSRN…SKST). Composition is skewed to polar residues over residues 48-60 (TKAN…TPAS), 71-93 (SPQT…MMTQ), and 127-152 (QSQF…GNTF). The segment covering 153 to 165 (TDSSSADSDMTST) has biased composition (low complexity). The RNA-binding stretch occupies residues 299–401 (NNGIHINNKV…NSKSKTARAH (103 aa)). Over residues 402-418 (NVSTSNNSPSTDNDSIS) the composition is skewed to low complexity. A Phosphoserine modification is found at Ser416. Asp461 (for protease activity; shared with dimeric partner) is an active-site residue. The segment at 583 to 640 (NVHTSESTRKYPYPFIHRMLAHANAQTIRYSLKNNTITYFNESDVDWSSAIDYQCPDC) is integrase-type zinc finger-like. The 176-residue stretch at 660 to 835 (NSYEPFQYLH…AGLDISTLLP (176 aa)) folds into the Integrase catalytic domain. Asp671 and Asp736 together coordinate Mg(2+). Disordered stretches follow at residues 956 to 1087 (SKAV…ETEK), 1092 to 1111 (RSPS…NIVP), and 1130 to 1186 (DLPL…EDNE). Positions 960–969 (SPTDSTPPST) are enriched in low complexity. Polar residues predominate over residues 1005-1015 (STPQISNIEST). The segment covering 1038-1053 (ESSHASKSKDFRHSDS) has biased composition (basic and acidic residues). 2 stretches are compositionally biased toward polar residues: residues 1054–1082 (YSEN…QISD) and 1101–1111 (PENNSSHNIVP). A Bipartite nuclear localization signal motif is present at residues 1178–1212 (KKRSLEDNETEIKVSRDTWNTKNMRSLEPPRSKKR). Positions 1338 to 1476 (NNYYITQLDI…DILGLEIKYQ (139 aa)) constitute a Reverse transcriptase Ty1/copia-type domain. The Mg(2+) site is built by Asp1346, Asp1427, Asp1428, Asp1610, Glu1652, and Asp1685. The 143-residue stretch at 1610 to 1752 (DASYGNQPYY…IKTFKLLTNK (143 aa)) folds into the RNase H Ty1/copia-type domain.

The capsid protein forms a homotrimer, from which the VLPs are assembled. The protease is a homodimer, whose active site consists of two apposed aspartic acid residues. In terms of processing, initially, virus-like particles (VLPs) are composed of the structural unprocessed proteins Gag and Gag-Pol, and also contain the host initiator methionine tRNA (tRNA(i)-Met) which serves as a primer for minus-strand DNA synthesis, and a dimer of genomic Ty RNA. Processing of the polyproteins occurs within the particle and proceeds by an ordered pathway, called maturation. First, the protease (PR) is released by autocatalytic cleavage of the Gag-Pol polyprotein yielding capsid protein p45 and a Pol-p154 precursor protein. This cleavage is a prerequisite for subsequent processing of Pol-p154 at the remaining sites to release the mature structural and catalytic proteins. Maturation takes place prior to the RT reaction and is required to produce transposition-competent VLPs.

The protein localises to the cytoplasm. It localises to the nucleus. It catalyses the reaction DNA(n) + a 2'-deoxyribonucleoside 5'-triphosphate = DNA(n+1) + diphosphate. The catalysed reaction is Endonucleolytic cleavage to 5'-phosphomonoester.. Capsid protein (CA) is the structural component of the virus-like particle (VLP), forming the shell that encapsulates the retrotransposons dimeric RNA genome. The particles are assembled from trimer-clustered units and there are holes in the capsid shells that allow for the diffusion of macromolecules. CA also has nucleocapsid-like chaperone activity, promoting primer tRNA(i)-Met annealing to the multipartite primer-binding site (PBS), dimerization of Ty1 RNA and initiation of reverse transcription. Its function is as follows. The aspartyl protease (PR) mediates the proteolytic cleavages of the Gag and Gag-Pol polyproteins after assembly of the VLP. Functionally, reverse transcriptase/ribonuclease H (RT) is a multifunctional enzyme that catalyzes the conversion of the retro-elements RNA genome into dsDNA within the VLP. The enzyme displays a DNA polymerase activity that can copy either DNA or RNA templates, and a ribonuclease H (RNase H) activity that cleaves the RNA strand of RNA-DNA heteroduplexes during plus-strand synthesis and hydrolyzes RNA primers. The conversion leads to a linear dsDNA copy of the retrotransposon that includes long terminal repeats (LTRs) at both ends. In terms of biological role, integrase (IN) targets the VLP to the nucleus, where a subparticle preintegration complex (PIC) containing at least integrase and the newly synthesized dsDNA copy of the retrotransposon must transit the nuclear membrane. Once in the nucleus, integrase performs the integration of the dsDNA into the host genome. The sequence is that of Transposon Ty1-JR2 Gag-Pol polyprotein (TY1B-JR2) from Saccharomyces cerevisiae (strain ATCC 204508 / S288c) (Baker's yeast).